The sequence spans 570 residues: Serine/threonine-protein kinase STY17 (570 aa).

A disordered region spans residues Leu112–Gly145. The segment covering Asp129 to Gly145 has biased composition (polar residues). The ACT domain occupies Glu180–Phe260. A Protein kinase domain is found at Leu292–Ile545. ATP is bound by residues Val298–Leu306 and Lys319. Residue Asp413 is the Proton acceptor of the active site. Ser441 carries the phosphoserine modification. Phosphothreonine is present on Thr445.

This sequence belongs to the protein kinase superfamily. Ser/Thr protein kinase family. In terms of processing, autophosphorylated on serine and threonine residues. Autophosphorylated at Thr-445.

The protein resides in the cytoplasm. The protein localises to the cytosol. It catalyses the reaction L-seryl-[protein] + ATP = O-phospho-L-seryl-[protein] + ADP + H(+). The enzyme catalyses L-threonyl-[protein] + ATP = O-phospho-L-threonyl-[protein] + ADP + H(+). Its activity is regulated as follows. Activated by autophosphorylation at Thr-445. Serine/threonine protein kinase that specifically phosphorylates chloroplast precursor proteins in the cytosol within the cleavable presequences (transit peptides). May be part of a cytosolic regulatory network involved in chloroplast protein import. Does not phosphorylate mitochondrion precursor proteins. Specific for ATP and does not utilize other NTPs. Plays a role in chloroplast biogenesis and differentiation in cotyledons, possibly through phosphorylation of chloroplast preproteins. The sequence is that of Serine/threonine-protein kinase STY17 from Arabidopsis thaliana (Mouse-ear cress).